The following is a 128-amino-acid chain: Sulfurtransferase TusD (128 aa).

The active-site Cysteine persulfide intermediate is the cysteine 78.

This sequence belongs to the DsrE/TusD family. Heterohexamer, formed by a dimer of trimers. The hexameric TusBCD complex contains 2 copies each of TusB, TusC and TusD. The TusBCD complex interacts with TusE.

The protein resides in the cytoplasm. Functionally, part of a sulfur-relay system required for 2-thiolation of 5-methylaminomethyl-2-thiouridine (mnm(5)s(2)U) at tRNA wobble positions. Accepts sulfur from TusA and transfers it in turn to TusE. In Escherichia coli O139:H28 (strain E24377A / ETEC), this protein is Sulfurtransferase TusD.